A 772-amino-acid polypeptide reads, in one-letter code: Putative ribosomal protein S6 kinase alpha-2 (772 aa).

One can recognise a Protein kinase 1 domain in the interval 17 to 284; the sequence is FALLRVLGKG…VDEIKNHKFM (268 aa). ATP-binding positions include 23–31 and lysine 49; that span reads LGKGAYGKV. Residue aspartate 145 is the Proton acceptor of the active site. Serine 180, serine 342, and serine 347 each carry phosphoserine; by autocatalysis. Residues 285–353 form the AGC-kinase C-terminal domain; that stretch reads SSIDWDAAVK…VSPSVIFAND (69 aa). The region spanning 382–653 is the Protein kinase 2 domain; that stretch reads KSDAGLLGKG…MQELTAHMWL (272 aa). ATP is bound by residues 388–396 and lysine 411; that span reads LGKGAFSVV. The Proton acceptor role is filled by aspartate 500. A disordered region spans residues 706–772; it reads RGIKRQSGDK…IRETRGSDSS (67 aa). Phosphoserine; by autocatalysis is present on serine 712. Composition is skewed to polar residues over residues 718–727 and 739–748; these read SGNSKNSRVT and EMTSSTSRPS.

This sequence belongs to the protein kinase superfamily. AGC Ser/Thr protein kinase family. S6 kinase subfamily. It depends on Mg(2+) as a cofactor.

The catalysed reaction is L-seryl-[protein] + ATP = O-phospho-L-seryl-[protein] + ADP + H(+). It carries out the reaction L-threonyl-[protein] + ATP = O-phospho-L-threonyl-[protein] + ADP + H(+). With respect to regulation, activated by multiple phosphorylations on threonine and serine residues. In terms of biological role, serine/threonine kinase that may play a role in mediating the mitogen- and stress-induced effects on transcription. May repress transcription via phosphorylation of 'Ser-1' of histone H2A. May phosphorylate histone H3. In Caenorhabditis elegans, this protein is Putative ribosomal protein S6 kinase alpha-2 (rskn-2).